Consider the following 58-residue polypeptide: Large ribosomal subunit protein bL32 (58 aa).

The segment covering 1 to 20 (MALPKHKKSKSKRDKRRTHQ) has biased composition (basic residues). The disordered stretch occupies residues 1–26 (MALPKHKKSKSKRDKRRTHQKLTAPN).

Belongs to the bacterial ribosomal protein bL32 family.

This Desulfatibacillum aliphaticivorans protein is Large ribosomal subunit protein bL32.